Here is a 145-residue protein sequence, read N- to C-terminus: D-aminoacyl-tRNA deacylase (145 aa).

The Gly-cisPro motif, important for rejection of L-amino acids motif lies at 137–138 (GP).

The protein belongs to the DTD family. In terms of assembly, homodimer.

Its subcellular location is the cytoplasm. It catalyses the reaction glycyl-tRNA(Ala) + H2O = tRNA(Ala) + glycine + H(+). The enzyme catalyses a D-aminoacyl-tRNA + H2O = a tRNA + a D-alpha-amino acid + H(+). Functionally, an aminoacyl-tRNA editing enzyme that deacylates mischarged D-aminoacyl-tRNAs. Also deacylates mischarged glycyl-tRNA(Ala), protecting cells against glycine mischarging by AlaRS. Acts via tRNA-based rather than protein-based catalysis; rejects L-amino acids rather than detecting D-amino acids in the active site. By recycling D-aminoacyl-tRNA to D-amino acids and free tRNA molecules, this enzyme counteracts the toxicity associated with the formation of D-aminoacyl-tRNA entities in vivo and helps enforce protein L-homochirality. The protein is D-aminoacyl-tRNA deacylase of Yersinia pestis bv. Antiqua (strain Antiqua).